The following is a 542-amino-acid chain: Adenosylmethionine-8-amino-7-oxononanoate aminotransferase (542 aa).

170 to 171 provides a ligand contact to pyridoxal 5'-phosphate; that stretch reads GS. Y205 is a binding site for substrate. Pyridoxal 5'-phosphate is bound at residue D311. Positions 340, 375, and 470 each coordinate substrate. K340 is modified (N6-(pyridoxal phosphate)lysine). The disordered stretch occupies residues 509–542; the sequence is DGGLWTKRPDGPDNPDKANTPDTPDGARTGETVV. Residues 515–524 show a composition bias toward basic and acidic residues; that stretch reads KRPDGPDNPD.

The protein belongs to the class-III pyridoxal-phosphate-dependent aminotransferase family. BioA subfamily. In terms of assembly, homodimer. Pyridoxal 5'-phosphate is required as a cofactor.

It is found in the cytoplasm. The catalysed reaction is (8S)-8-amino-7-oxononanoate + S-adenosyl-L-methionine = S-adenosyl-4-methylsulfanyl-2-oxobutanoate + (7R,8S)-7,8-diammoniononanoate. The protein operates within cofactor biosynthesis; biotin biosynthesis; 7,8-diaminononanoate from 8-amino-7-oxononanoate (SAM route): step 1/1. Functionally, catalyzes the transfer of the alpha-amino group from S-adenosyl-L-methionine (SAM) to 7-keto-8-aminopelargonic acid (KAPA) to form 7,8-diaminopelargonic acid (DAPA). It is the only aminotransferase known to utilize SAM as an amino donor. The sequence is that of Adenosylmethionine-8-amino-7-oxononanoate aminotransferase from Nitratidesulfovibrio vulgaris (strain ATCC 29579 / DSM 644 / CCUG 34227 / NCIMB 8303 / VKM B-1760 / Hildenborough) (Desulfovibrio vulgaris).